The primary structure comprises 988 residues: Voltage-gated delayed rectifier potassium channel KCNH5 (988 aa).

Topologically, residues Met-1–Trp-217 are cytoplasmic. The region spanning Gln-12 to Ser-90 is the PAS domain. The region spanning Asn-91–Thr-143 is the PAC domain. The helical transmembrane segment at Asp-218–Phe-238 threads the bilayer. Residues Lys-239–Asn-243 lie on the Extracellular side of the membrane. A helical transmembrane segment spans residues Asn-244–Leu-264. The Cytoplasmic portion of the chain corresponds to Asn-265 to Thr-291. The chain crosses the membrane as a helical span at residues Trp-292–Val-312. The Extracellular segment spans residues Asp-313–Leu-319. A helical; Voltage-sensor transmembrane segment spans residues Phe-320–His-340. Over Tyr-341–Ala-346 the chain is Cytoplasmic. Residues Ala-347 to Trp-367 traverse the membrane as a helical segment. Residues Tyr-368–Tyr-419 lie on the Extracellular side of the membrane. N-linked (GlcNAc...) asparagine glycosylation occurs at Asn-403. An intramembrane region (pore-forming) is located at residues Val-420–Pro-440. The short motif at Thr-432–Asn-437 is the Selectivity filter element. Residues Thr-441–Lys-446 are Extracellular-facing. A helical transmembrane segment spans residues Met-447 to Val-467. The Cytoplasmic portion of the chain corresponds to Thr-468–Phe-988. Ala-550 to Thr-667 is a binding site for a nucleoside 3',5'-cyclic phosphate. The interval His-704–Gln-715 is calmodulin-binding. Residues Lys-717–Gln-742 are disordered. Polar residues predominate over residues Asn-721–Gln-742. A Glycyl lysine isopeptide (Lys-Gly) (interchain with G-Cter in ubiquitin) cross-link involves residue Lys-785. The interval Gly-838–Ile-890 is disordered. The segment covering Ser-871–Leu-885 has biased composition (basic and acidic residues). Ser-883 bears the Phosphoserine mark. Positions Thr-909 to Pro-948 are CAD (involved in subunit assembly). The segment at Asp-969–Phe-988 is disordered. Residues Glu-977–Phe-988 are compositionally biased toward basic and acidic residues.

The protein belongs to the potassium channel family. H (Eag) (TC 1.A.1.20) subfamily. Kv10.2/KCNH5 sub-subfamily. In terms of assembly, homotetramer. The potassium channel is probably composed of a homo- or heterotetrameric complex of pore-forming alpha subunits that can associate with modulating beta subunits. Heteromultimer with KCNH1/EAG. Detected in brain, skeletal muscle, heart, placenta, lung and liver, and at low levels in kidney.

It is found in the membrane. The catalysed reaction is K(+)(in) = K(+)(out). Its function is as follows. Pore-forming (alpha) subunit of a voltage-gated delayed rectifier potassium channel that mediates outward-rectifying potassium currents which, on depolarization, reaches a steady-state level and do not inactivate. The kinetic is characterized by a slow activation time course and a small voltage dependence of the activation time constants, therefore, starts to open at more negative voltages. The activation kinetics depend on the prepulse potential and external divalent cation concentration. The time course of activation is biphasic with a fast and a slowly activating current component. With negative prepulses, the current activation is delayed and slowed down several fold, whereas more positive prepulses speed up activation, therefore the activation rate depends on holding potential. This is Voltage-gated delayed rectifier potassium channel KCNH5 from Homo sapiens (Human).